The sequence spans 107 residues: uncharacterized protein (107 aa).

Residues 13-33 traverse the membrane as a helical segment; sequence VLIVTFLSSFIFIVWLPVALV.

The protein resides in the membrane. This is an uncharacterized protein from Saccharomyces cerevisiae (strain ATCC 204508 / S288c) (Baker's yeast).